Here is an 828-residue protein sequence, read N- to C-terminus: Deubiquitinase MYSM1 (828 aa).

Acidic residues predominate over residues 1–12 (MAAEEADVDIEG). Residues 1–31 (MAAEEADVDIEGDVVAAAGAQPGSGENTASV) are disordered. Ser110 is modified (phosphoserine). In terms of domain architecture, SANT spans 116 to 167 (SYSVKWTIEEKELFEQGLAKFGRRWTKISKLIGSRTVLQVKSYARQYFKNKV). A Glycyl lysine isopeptide (Lys-Gly) (interchain with G-Cter in SUMO2) cross-link involves residue Lys187. Ser218 carries the phosphoserine modification. A Phosphothreonine modification is found at Thr236. Phosphoserine occurs at positions 242, 267, and 340. Positions 372 to 470 (LKPPEQEIEI…FGCEQAVYNR (99 aa)) constitute an SWIRM domain. Residues 577 to 709 (VKVASEALLI…PLPYSQITCL (133 aa)) form the MPN domain. Zn(2+)-binding residues include His656, His658, and Asp669. Residues 656–669 (HSHPAFDPNPSLRD) carry the JAMM motif motif. The LXXLL motif motif lies at 774–778 (LQKLL).

This sequence belongs to the peptidase M67A family. MYSM1 subfamily. Component of a large chromatin remodeling complex, at least composed of MYSM1, PCAF, RBM10 and KIF11/TRIP5. Binds histones. Interacts with NFIL3; this interaction is critical for their correct recruitment to the ID2 locus during natural killer cell maturation.

Its subcellular location is the nucleus. It localises to the cytoplasm. Functionally, metalloprotease with deubiquitinase activity that plays important regulator roles in hematopoietic stem cell function, blood cell production and immune response. Participates in the normal programming of B-cell responses to antigen after the maturation process. Within the cytoplasm, plays critical roles in the repression of innate immunity and autoimmunity. Removes 'Lys-63'-linked polyubiquitins from TRAF3 and TRAF6 complexes. Attenuates NOD2-mediated inflammation and tissue injury by promoting 'Lys-63'-linked deubiquitination of RIPK2 component. Suppresses the CGAS-STING1 signaling pathway by cleaving STING1 'Lys-63'-linked ubiquitin chains. In the nucleus, acts as a hematopoietic transcription regulator derepressing a range of genes essential for normal stem cell differentiation including EBF1 and PAX5 in B-cells, ID2 in NK-cell progenitor or FLT3 in dendritic cell precursors. Deubiquitinates monoubiquitinated histone H2A, a specific tag for epigenetic transcriptional repression, leading to dissociation of histone H1 from the nucleosome. The protein is Deubiquitinase MYSM1 (MYSM1) of Homo sapiens (Human).